The chain runs to 272 residues: Cell division protein DivIB (272 aa).

Over 1–21 (MRLSSHGKKTVSTSNNPVFNR) the chain is Cytoplasmic. Residues 22 to 42 (IGLFFTAAILFALFLQMLFFL) form a helical membrane-spanning segment. Positions 43–115 (RPWQDIKETK…GTAIIRVNEN (73 aa)) constitute a POTRA domain. Topologically, residues 43–272 (RPWQDIKETK…SSSKSSNSSK (230 aa)) are extracellular. Positions 253 to 272 (LSSLSSDKSKSSSKSSNSSK) are disordered.

The protein belongs to the FtsQ/DivIB family. DivIB subfamily.

It is found in the cell membrane. Cell division protein that may be involved in stabilizing or promoting the assembly of the division complex. This chain is Cell division protein DivIB, found in Oenococcus oeni (strain ATCC BAA-331 / PSU-1).